Here is an 81-residue protein sequence, read N- to C-terminus: Photosystem I iron-sulfur center (81 aa).

2 4Fe-4S ferredoxin-type domains span residues 2-31 and 39-68; these read AHSVKIYDTCIGCTQCVRACPTDVLEMIPW and IASAPRTEDCVGCKRCESACPTDFLSVRVY. [4Fe-4S] cluster-binding residues include cysteine 11, cysteine 14, cysteine 17, cysteine 21, cysteine 48, cysteine 51, cysteine 54, and cysteine 58.

As to quaternary structure, the eukaryotic PSI reaction center is composed of at least 11 subunits. The cofactor is [4Fe-4S] cluster.

The protein resides in the plastid. It is found in the chloroplast thylakoid membrane. The catalysed reaction is reduced [plastocyanin] + hnu + oxidized [2Fe-2S]-[ferredoxin] = oxidized [plastocyanin] + reduced [2Fe-2S]-[ferredoxin]. Functionally, apoprotein for the two 4Fe-4S centers FA and FB of photosystem I (PSI); essential for photochemical activity. FB is the terminal electron acceptor of PSI, donating electrons to ferredoxin. The C-terminus interacts with PsaA/B/D and helps assemble the protein into the PSI complex. Required for binding of PsaD and PsaE to PSI. PSI is a plastocyanin-ferredoxin oxidoreductase, converting photonic excitation into a charge separation, which transfers an electron from the donor P700 chlorophyll pair to the spectroscopically characterized acceptors A0, A1, FX, FA and FB in turn. This Staurastrum punctulatum (Green alga) protein is Photosystem I iron-sulfur center.